The primary structure comprises 711 residues: Ribosomal RNA large subunit methyltransferase K/L (711 aa).

Positions 43–154 (LAYRITLWSR…RGQITLGINF (112 aa)) constitute a THUMP domain.

It belongs to the methyltransferase superfamily. RlmKL family.

The protein localises to the cytoplasm. The catalysed reaction is guanosine(2445) in 23S rRNA + S-adenosyl-L-methionine = N(2)-methylguanosine(2445) in 23S rRNA + S-adenosyl-L-homocysteine + H(+). It catalyses the reaction guanosine(2069) in 23S rRNA + S-adenosyl-L-methionine = N(2)-methylguanosine(2069) in 23S rRNA + S-adenosyl-L-homocysteine + H(+). Specifically methylates the guanine in position 2445 (m2G2445) and the guanine in position 2069 (m7G2069) of 23S rRNA. This Shewanella loihica (strain ATCC BAA-1088 / PV-4) protein is Ribosomal RNA large subunit methyltransferase K/L.